The chain runs to 361 residues: Chorismate synthase (361 aa).

Positions 37 to 59 (TEEDLQHDLDRRRPGTSRYTTPR) are disordered. The span at 40-49 (DLQHDLDRRR) shows a compositional bias: basic and acidic residues. 2 residues coordinate NADP(+): Arg-48 and Arg-54. Residues 125–127 (RSS), 238–239 (NA), Gly-278, 293–297 (KPTSS), and Arg-319 each bind FMN.

Belongs to the chorismate synthase family. Homotetramer. FMNH2 is required as a cofactor.

It carries out the reaction 5-O-(1-carboxyvinyl)-3-phosphoshikimate = chorismate + phosphate. The protein operates within metabolic intermediate biosynthesis; chorismate biosynthesis; chorismate from D-erythrose 4-phosphate and phosphoenolpyruvate: step 7/7. Functionally, catalyzes the anti-1,4-elimination of the C-3 phosphate and the C-6 proR hydrogen from 5-enolpyruvylshikimate-3-phosphate (EPSP) to yield chorismate, which is the branch point compound that serves as the starting substrate for the three terminal pathways of aromatic amino acid biosynthesis. This reaction introduces a second double bond into the aromatic ring system. In Erwinia tasmaniensis (strain DSM 17950 / CFBP 7177 / CIP 109463 / NCPPB 4357 / Et1/99), this protein is Chorismate synthase.